The sequence spans 460 residues: Cysteine--tRNA ligase (460 aa).

C27 contributes to the Zn(2+) binding site. The 'HIGH' region signature appears at 29–39; it reads PTVYDLIHVGN. Zn(2+)-binding residues include C207, H232, and E236. Positions 264–268 match the 'KMSKS' region motif; sequence KMSKS. K267 serves as a coordination point for ATP.

Belongs to the class-I aminoacyl-tRNA synthetase family. Monomer. Zn(2+) is required as a cofactor.

The protein resides in the cytoplasm. The enzyme catalyses tRNA(Cys) + L-cysteine + ATP = L-cysteinyl-tRNA(Cys) + AMP + diphosphate. This Thermotoga maritima (strain ATCC 43589 / DSM 3109 / JCM 10099 / NBRC 100826 / MSB8) protein is Cysteine--tRNA ligase (cysS).